The following is a 445-amino-acid chain: Baccatin III:3-amino-3-phenylpropanoyltransferase (445 aa).

This sequence belongs to the plant acyltransferase family.

It carries out the reaction (3R)-3-amino-3-phenylpropanoyl-CoA + baccatin III = 3'-N-debenzoyl-2'-deoxytaxol + CoA. It participates in alkaloid biosynthesis; taxol biosynthesis. Acyltransferase involved in taxol biosynthesis. Catalyzes the selective 13-O-acylation of baccatin III with (3R)-3-amino-3-phenylpropanoyl-CoA as the acyl donor to form 3'-N-debenzoyl-2'-deoxytaxol. This is Baccatin III:3-amino-3-phenylpropanoyltransferase from Taxus cuspidata (Japanese yew).